The following is a 168-amino-acid chain: Lipoprotein signal peptidase (168 aa).

Helical transmembrane passes span 15 to 35 (AIAAVTVVLDQISKLWILGLL), 69 to 89 (WGRWLLIGFSILVVIGLAVWV), and 95 to 115 (PLLAVGIGLIIGGAIGNNLID). Catalysis depends on residues Asp-124 and Asp-141. A helical transmembrane segment spans residues 133–153 (FPWVFNIADSGISVGVALLLL).

It belongs to the peptidase A8 family.

The protein localises to the cell inner membrane. The enzyme catalyses Release of signal peptides from bacterial membrane prolipoproteins. Hydrolyzes -Xaa-Yaa-Zaa-|-(S,diacylglyceryl)Cys-, in which Xaa is hydrophobic (preferably Leu), and Yaa (Ala or Ser) and Zaa (Gly or Ala) have small, neutral side chains.. Its pathway is protein modification; lipoprotein biosynthesis (signal peptide cleavage). In terms of biological role, this protein specifically catalyzes the removal of signal peptides from prolipoproteins. The polypeptide is Lipoprotein signal peptidase (Caulobacter vibrioides (strain ATCC 19089 / CIP 103742 / CB 15) (Caulobacter crescentus)).